Here is a 154-residue protein sequence, read N- to C-terminus: UPF0039 protein sll0451 (154 aa).

Residues 8–151 (QRFNDISGEA…EHISMIFRVP (144 aa)) enclose the N-acetyltransferase domain.

Belongs to the UPF0039 (ElaA) family.

This Synechocystis sp. (strain ATCC 27184 / PCC 6803 / Kazusa) protein is UPF0039 protein sll0451.